Consider the following 171-residue polypeptide: Orange carotenoid-binding domain-containing protein (171 aa).

The region spanning 21-171 (GDAVASTITV…ADMGVDPLAD (151 aa)) is the OCP N-terminal domain.

It belongs to the orange carotenoid-binding protein family. 3'-hydroxyechinenone serves as cofactor.

The protein resides in the cellular thylakoid membrane. In terms of biological role, might act as a photo-protectant, protecting against damage induced by excess light via a process known as non-photochemical quenching (NPQ). The polypeptide is Orange carotenoid-binding domain-containing protein (Nostoc sp. (strain PCC 7120 / SAG 25.82 / UTEX 2576)).